The sequence spans 398 residues: Phosphoglycerate kinase (398 aa).

Substrate-binding positions include 20–22, arginine 35, 58–61, arginine 118, and arginine 155; these read DLN and HLGR. Residues lysine 206, glycine 295, glutamate 326, and 354-357 each bind ATP; that span reads GGDS.

It belongs to the phosphoglycerate kinase family. Monomer.

The protein resides in the cytoplasm. The enzyme catalyses (2R)-3-phosphoglycerate + ATP = (2R)-3-phospho-glyceroyl phosphate + ADP. The protein operates within carbohydrate degradation; glycolysis; pyruvate from D-glyceraldehyde 3-phosphate: step 2/5. In Onion yellows phytoplasma (strain OY-M), this protein is Phosphoglycerate kinase.